Reading from the N-terminus, the 249-residue chain is Small ribosomal subunit protein uS5 (249 aa).

A compositionally biased stretch (basic and acidic residues) spans 1–14 (MSAEAPKRQFGDRR). Residues 1–29 (MSAEAPKRQFGDRRRGGRRGGRRDGEEKG) form a disordered region. Residues 71–134 (LKDDVMKIRS…VIAKLSIIPI (64 aa)) form the S5 DRBM domain.

This sequence belongs to the universal ribosomal protein uS5 family. In terms of assembly, component of the small ribosomal subunit. Mature ribosomes consist of a small (40S) and a large (60S) subunit. The 40S subunit contains about 32 different proteins and 1 molecule of RNA (18S). The 60S subunit contains 45 different proteins and 3 molecules of RNA (25S, 5.8S and 5S).

It is found in the cytoplasm. Its function is as follows. Component of the ribosome, a large ribonucleoprotein complex responsible for the synthesis of proteins in the cell. The small ribosomal subunit (SSU) binds messenger RNAs (mRNAs) and translates the encoded message by selecting cognate aminoacyl-transfer RNA (tRNA) molecules. The large subunit (LSU) contains the ribosomal catalytic site termed the peptidyl transferase center (PTC), which catalyzes the formation of peptide bonds, thereby polymerizing the amino acids delivered by tRNAs into a polypeptide chain. The nascent polypeptides leave the ribosome through a tunnel in the LSU and interact with protein factors that function in enzymatic processing, targeting, and the membrane insertion of nascent chains at the exit of the ribosomal tunnel. RPS2 is important for the assembly and function of the 40S ribosomal subunitand is nvolved in nucleolar processing of pre-18S ribosomal RNA and ribosome assembly. This Candida albicans (strain SC5314 / ATCC MYA-2876) (Yeast) protein is Small ribosomal subunit protein uS5 (RPS21).